Consider the following 125-residue polypeptide: MORF4 family-associated protein 1 (125 aa).

The disordered stretch occupies residues 76-99; that stretch reads ESALNHLQGAGGAEPRGPRAEKAD. Residues 94 to 124 adopt a coiled-coil conformation; the sequence is RAEKADEKAQEMAKMAEMLVQLVRRIEKSES.

This sequence belongs to the MORF4 family-associated protein family. Found in a complex composed of MORF4L1, MRFAP1 and RB1. Interacts via its N-terminus with MORF4L1. Interacts with CSTB and MORF4L2.

The protein resides in the nucleus. Its subcellular location is the cytoplasm. The protein localises to the perinuclear region. This is MORF4 family-associated protein 1 from Rattus norvegicus (Rat).